Consider the following 123-residue polypeptide: Ribosome-binding factor A (123 aa).

The protein belongs to the RbfA family. Monomer. Binds 30S ribosomal subunits, but not 50S ribosomal subunits or 70S ribosomes.

The protein resides in the cytoplasm. One of several proteins that assist in the late maturation steps of the functional core of the 30S ribosomal subunit. Associates with free 30S ribosomal subunits (but not with 30S subunits that are part of 70S ribosomes or polysomes). Required for efficient processing of 16S rRNA. May interact with the 5'-terminal helix region of 16S rRNA. In Geotalea daltonii (strain DSM 22248 / JCM 15807 / FRC-32) (Geobacter daltonii), this protein is Ribosome-binding factor A.